A 352-amino-acid polypeptide reads, in one-letter code: S-adenosylmethionine:tRNA ribosyltransferase-isomerase (352 aa).

Belongs to the QueA family. In terms of assembly, monomer.

Its subcellular location is the cytoplasm. The catalysed reaction is 7-aminomethyl-7-carbaguanosine(34) in tRNA + S-adenosyl-L-methionine = epoxyqueuosine(34) in tRNA + adenine + L-methionine + 2 H(+). It functions in the pathway tRNA modification; tRNA-queuosine biosynthesis. In terms of biological role, transfers and isomerizes the ribose moiety from AdoMet to the 7-aminomethyl group of 7-deazaguanine (preQ1-tRNA) to give epoxyqueuosine (oQ-tRNA). The polypeptide is S-adenosylmethionine:tRNA ribosyltransferase-isomerase (Vibrio cholerae serotype O1 (strain ATCC 39541 / Classical Ogawa 395 / O395)).